Reading from the N-terminus, the 166-residue chain is UPF0304 protein VS_1049 (166 aa).

Belongs to the UPF0304 family.

The chain is UPF0304 protein VS_1049 from Vibrio atlanticus (strain LGP32) (Vibrio splendidus (strain Mel32)).